Reading from the N-terminus, the 143-residue chain is Large ribosomal subunit protein uL13 (143 aa).

The protein belongs to the universal ribosomal protein uL13 family. As to quaternary structure, part of the 50S ribosomal subunit.

This protein is one of the early assembly proteins of the 50S ribosomal subunit, although it is not seen to bind rRNA by itself. It is important during the early stages of 50S assembly. This Symbiobacterium thermophilum (strain DSM 24528 / JCM 14929 / IAM 14863 / T) protein is Large ribosomal subunit protein uL13.